Reading from the N-terminus, the 92-residue chain is uncharacterized protein (92 aa).

This is an uncharacterized protein from Pasteurella multocida (strain Pm70).